The sequence spans 657 residues: Threonine--tRNA ligase (657 aa).

One can recognise a TGS domain in the interval glutamine 7 to threonine 70. Residues aspartate 253–proline 555 form a catalytic region. Zn(2+)-binding residues include cysteine 351, histidine 402, and histidine 532.

It belongs to the class-II aminoacyl-tRNA synthetase family. Homodimer. Requires Zn(2+) as cofactor.

The protein localises to the cytoplasm. The catalysed reaction is tRNA(Thr) + L-threonine + ATP = L-threonyl-tRNA(Thr) + AMP + diphosphate + H(+). Its function is as follows. Catalyzes the attachment of threonine to tRNA(Thr) in a two-step reaction: L-threonine is first activated by ATP to form Thr-AMP and then transferred to the acceptor end of tRNA(Thr). Also edits incorrectly charged L-seryl-tRNA(Thr). This is Threonine--tRNA ligase from Chlorobium limicola (strain DSM 245 / NBRC 103803 / 6330).